The following is a 120-amino-acid chain: UPF0102 protein COXBURSA331_A1934 (120 aa).

Belongs to the UPF0102 family.

The polypeptide is UPF0102 protein COXBURSA331_A1934 (Coxiella burnetii (strain RSA 331 / Henzerling II)).